The following is a 418-amino-acid chain: Gamma-glutamyl phosphate reductase (418 aa).

This sequence belongs to the gamma-glutamyl phosphate reductase family.

It localises to the cytoplasm. It catalyses the reaction L-glutamate 5-semialdehyde + phosphate + NADP(+) = L-glutamyl 5-phosphate + NADPH + H(+). The protein operates within amino-acid biosynthesis; L-proline biosynthesis; L-glutamate 5-semialdehyde from L-glutamate: step 2/2. Catalyzes the NADPH-dependent reduction of L-glutamate 5-phosphate into L-glutamate 5-semialdehyde and phosphate. The product spontaneously undergoes cyclization to form 1-pyrroline-5-carboxylate. In Histophilus somni (strain 2336) (Haemophilus somnus), this protein is Gamma-glutamyl phosphate reductase.